The sequence spans 1517 residues: MSKFKVIEIKEDARPRDFEAFQLRLASPEKIKSWSYGEVKKPETINYRTLKPERDGLFCAKIFGPIRDYECLCGKYKKMRFKGVKCEKCGVEVANSKVRRSRMGHIELVTPVAHIWYVNSLPSRIGTLLGVKMKDLERVLYYEAYIVENPGDAFYDNESTKKVEYCDVLNEEQYQNLMQRYENSGFKARMGGEVVRDLLANLDLVALLNQLKEEMAATNSEAKKKTIIKRLKVVENFLNSNLNANADSDEAVPNRPEWMMITNLPVLPPDLRPLVALDGGKFAVSDVNDLYRRVINRNTRLKKLMELDAPEIIIRNEKRMLQEAVDALFDNGRRANAVKGANKRPLKSLSEIIKGKQGRFRQNLLGKRVDFSGRSVIVVGPKLRMDQCGLPKKMALELFKPHLLAKLEEKGYATTVKQAKKMIENKTNEVWECLEEVVKGHPVMLNRAPTLHKLSIQAFHPVLVEGKAIQLHPLVCAAFNADFDGDQMAVHVPLSQEAIAECKVLMLSSMNILLPASGKSVTVPSQDMVLGIYYLSLEKAGAKGSHKICTGIDEVMMALESKCLDIHASIQTMVDGRKITTTAGRLIIKSILPDFVPENSWNKVLKKKDIAALVDYVYKQGGLEITASFLDRLKNLGFEYATKAGISISIADIIVPNDKQKAIDEAKKQVREIQNSYNLGLITSGERYNKIIDIWKSTNNVLSKEMMKLVEKDKEGFNSIYMMADSGARGSAAQISQLAAMRGLMTKPDGSIIETPIISNFREGLNVLEYFISTHGARKGLADTALKTANAGYLTRKLIDVAQNVKITIEDCGTHEGVEINEITADSSIIETLEERILGRVLAEDVIDPITNSVLFAEGTLMDEEKAKILGESGIKSVNIRTPITCKAKKGICAKCYGINLGEGKLVKPGEAVGIISAQSIGEPGTQLTLRTFHSGGTASTDLQDRQVSAQKEGFIRFYNLKTYKNKEGKNIVANRRNAAILLVEPKIKTPFKGVINIENIHEDVIVSIKNKKQEVKYILRKYDLAKPNELAGVSGSIDGKLYLPYQSGMQVEENESIVEVIKEGWNVPNRIPFASEILVEDGEPVVQNIKAGEKGTLKFYILKGDGLDRVKNVKKGDIVKEKGFFVVIADENDREAKRHYIPRESKIEFNDSEKIDDANTIIASAPKKERKVIAEWDAYNNTIIAEIDGVVSFEDIEAGYSADEQIDEATGKRSLVINEYLPSGVRPTLVIAGKGDKAVRYQLEPKTVIFVHDGDKIAQADILAKTPKAAAKSKDITGGLPRVSELFEARKPKNAAVIAEIDGVVRFDKPLRSKERIIIQAEDGTSAEYLIDKSKHIQVRDGEFIHAGEKLTDGVVSSHDVLKILGEKALHYYLISEIQQVYRGQGVVISDKHIEVIVSQMLRQVKVVDSGHTKFIEGDLVSRRKFREENERIIRMGGEPAIAEPVLLGVTRAAIGSDSVISAASFQETTKVLTEASIAGKFDYLEDLKENVILGRMIPVGTGLYGEQNLKLKEQE.

The Zn(2+) site is built by Cys71, Cys73, Cys86, and Cys89. Mg(2+) contacts are provided by Asp482, Asp484, and Asp486. Zn(2+) contacts are provided by Cys812, Cys886, Cys893, and Cys896.

The protein belongs to the RNA polymerase beta' chain family. In terms of assembly, the RNAP catalytic core consists of 2 alpha, 1 beta, 1 beta' and 1 omega subunit. When a sigma factor is associated with the core the holoenzyme is formed, which can initiate transcription. Mg(2+) serves as cofactor. Requires Zn(2+) as cofactor.

It catalyses the reaction RNA(n) + a ribonucleoside 5'-triphosphate = RNA(n+1) + diphosphate. Functionally, DNA-dependent RNA polymerase catalyzes the transcription of DNA into RNA using the four ribonucleoside triphosphates as substrates. In Campylobacter jejuni subsp. jejuni serotype O:6 (strain 81116 / NCTC 11828), this protein is DNA-directed RNA polymerase subunit beta'.